The sequence spans 95 residues: Small ribosomal subunit protein bS6 (95 aa).

The protein belongs to the bacterial ribosomal protein bS6 family.

In terms of biological role, binds together with bS18 to 16S ribosomal RNA. The polypeptide is Small ribosomal subunit protein bS6 (rpsF) (Halalkalibacterium halodurans (strain ATCC BAA-125 / DSM 18197 / FERM 7344 / JCM 9153 / C-125) (Bacillus halodurans)).